A 500-amino-acid chain; its full sequence is Hexokinase-3 (500 aa).

Residues 4–24 traverse the membrane as a helical segment; sequence VGLGVAVGCAAVTCAIAAALV. The region spanning 35–487 is the Hexokinase domain; the sequence is RRAVALLREF…SGVGAALLAA (453 aa). Residues 90 to 222 are hexokinase small subdomain; that stretch reads SGSEEGVYYS…GLNVRVTALV (133 aa). Residues G104, T105, and N106 each coordinate ADP. The D-glucose site is built by T188, K189, N223, and D224. The hexokinase large subdomain stretch occupies residues 223–476; that stretch reads NDTVGTLALG…RNVTLRVTED (254 aa). An ADP-binding site is contributed by S247. D-glucose-binding residues include N250, E278, and E309. An ADP-binding site is contributed by G441.

It belongs to the hexokinase family. As to expression, expressed in roots, leaves, flowers, immature seeds and seed coat. Expressed in young shoots, tiller buds, endosperm seven days after fertilization, and interconnecting tissues such as pulvini and nodes.

The protein resides in the mitochondrion outer membrane. It carries out the reaction a D-hexose + ATP = a D-hexose 6-phosphate + ADP + H(+). It catalyses the reaction D-fructose + ATP = D-fructose 6-phosphate + ADP + H(+). The enzyme catalyses D-glucose + ATP = D-glucose 6-phosphate + ADP + H(+). It participates in carbohydrate metabolism; hexose metabolism. Its pathway is carbohydrate degradation; glycolysis; D-glyceraldehyde 3-phosphate and glycerone phosphate from D-glucose: step 1/4. Fructose and glucose phosphorylating enzyme. Involved in the regulation of cell expansion in spikelet hulls, grain size, and gibberellin biosynthesis and homeostasis. The protein is Hexokinase-3 of Oryza sativa subsp. japonica (Rice).